The following is a 542-amino-acid chain: Glucans biosynthesis protein G (542 aa).

An N-terminal signal peptide occupies residues 1-34 (MVSLLRCPSSKPYSSLICSLTLGAVVALSGVAYA).

This sequence belongs to the OpgD/OpgG family.

It is found in the periplasm. It participates in glycan metabolism; osmoregulated periplasmic glucan (OPG) biosynthesis. Involved in the biosynthesis of osmoregulated periplasmic glucans (OPGs). This is Glucans biosynthesis protein G from Shewanella baltica (strain OS155 / ATCC BAA-1091).